The chain runs to 429 residues: Probable exoglucanase GH6D (429 aa).

The first 17 residues, 1–17 (MRAVYAILAGLLATGSA), serve as a signal peptide directing secretion. Residues tryptophan 75 and serine 77 each contribute to the substrate site. Catalysis depends on proton donor residues aspartate 115 and aspartate 162. Positions 206 and 209 each coordinate substrate. Asparagine 237 is a glycosylation site (N-linked (GlcNAc...) asparagine). Substrate is bound by residues asparagine 240, tryptophan 300, lysine 328, and glutamate 332. Residues 240–261 (NYNPYSTNNPPPYTAGSPSADE) form a disordered region. A disordered region spans residues 362 to 390 (PEIRADGGGGGSPAPGPSSTAVAPSPSAT). Low complexity predominate over residues 378-390 (PSSTAVAPSPSAT). The CBM1 domain maps to 394 to 429 (NCAARWAQCGGQGWTGPTCCAQGTCQASNQWYSQCL).

Belongs to the glycosyl hydrolase 6 (cellulase B) family.

Its subcellular location is the secreted. Functionally, probable exoglucanase that may play an important function in biomass degradation by catalyzing the hydrolysis of cellulose. The sequence is that of Probable exoglucanase GH6D from Podospora anserina (strain S / ATCC MYA-4624 / DSM 980 / FGSC 10383) (Pleurage anserina).